A 1085-amino-acid polypeptide reads, in one-letter code: Solute carrier family 12 member 4 (1085 aa).

Residues 1–119 (MPHFTVVPVD…RRAAKAPSMG (119 aa)) lie on the Cytoplasmic side of the membrane. Phosphoserine is present on serine 24. Residues 28–46 (YGERAEREDPDGHGNHRES) are compositionally biased toward basic and acidic residues. Positions 28–47 (YGERAEREDPDGHGNHRESS) are disordered. Phosphoserine is present on residues serine 47, serine 59, serine 81, and serine 88. The chain crosses the membrane as a discontinuously helical span at residues 120-141 (TLMGVYLPCLQNIFGVILFLRL). K(+)-binding residues include asparagine 131 and isoleucine 132. The Extracellular segment spans residues 142 to 149 (TWMVGTAG). Residues 150–172 (VLQALLIVLICCCCTLLTAISMS) traverse the membrane as a helical segment. At 173–196 (AIATNGVVPAGGSYFMISRSLGPE) the chain is on the cytoplasmic side. Residues 197 to 225 (FGGAVGLCFYLGTTFAAAMYILGAIEILL) form a helical membrane-spanning segment. Position 216 (tyrosine 216) interacts with K(+). The Extracellular segment spans residues 226 to 248 (TYIAPPAAIFYPSGTHDTSNATL). The N-linked (GlcNAc...) asparagine glycan is linked to asparagine 245. Transmembrane regions (helical) follow at residues 249–271 (NNMR…VGVK) and 272–297 (YVNK…GGIK). Over 298–419 (SMFDPPVFPV…LYVVADIATS (122 aa)) the chain is Extracellular. Cysteine 308 and cysteine 323 form a disulfide bridge. 3 N-linked (GlcNAc...) asparagine glycosylation sites follow: asparagine 312, asparagine 331, and asparagine 347. A disulfide bridge connects residues cysteine 343 and cysteine 353. Residues 420–440 (FTVLVGIFFPSVTGIMAGSNR) traverse the membrane as a helical segment. The K(+) site is built by proline 429 and threonine 432. Glycine 433, isoleucine 434, and methionine 435 together coordinate chloride. At 441–450 (SGDLRDAQKS) the chain is on the cytoplasmic side. The chain crosses the membrane as a helical span at residues 451-473 (IPVGTILAIVTTSLVYFSSVVLF). The Extracellular portion of the chain corresponds to 474 to 504 (GACIEGVVLRDKYGDGVSRNLVVGTLAWPSP). The helical transmembrane segment at 505–531 (WVIVVGSFFSTCGAGLQSLTGAPRLLQ) threads the bilayer. Over 532–554 (AIAKDNIIPFLRVFGHGKANGEP) the chain is Cytoplasmic. 2 consecutive transmembrane segments (helical) span residues 555-575 (TWAL…ASLD) and 576-598 (MVAP…ACAV). Chloride is bound at residue tyrosine 589. The Cytoplasmic segment spans residues 599 to 612 (QTLLRTPNWRPRFK). A run of 2 helical transmembrane segments spans residues 613-635 (YYHW…VSSW) and 636-651 (YYAL…IYKY). Topologically, residues 652 to 1085 (IEYQGAEKEW…GGREVITIYS (434 aa)) are cytoplasmic. The scissor helix stretch occupies residues 665–681 (IRGLSLSAARYALLRLE). 5 residues coordinate ATP: leucine 697, lysine 699, lysine 707, tyrosine 708, and valine 730. Serine 734 is modified (phosphoserine). ATP-binding residues include glycine 794, tryptophan 795, and tyrosine 797. Phosphoserine occurs at positions 916 and 967. Threonine 983 carries the phosphothreonine modification. Phosphoserine is present on serine 1050.

This sequence belongs to the SLC12A transporter family. K/Cl co-transporter subfamily. Homodimer; adopts a domain-swap conformation at the scissor helices connecting the transmembrane domain and C-terminal domain. Heterodimer with other K-Cl cotransporters. Post-translationally, N-glycosylated. In terms of processing, phosphorylated, phosphorylation may regulate transporter activity.

It localises to the cell membrane. It carries out the reaction K(+)(in) + chloride(in) = K(+)(out) + chloride(out). With respect to regulation, inhibited by WNK3. Functionally, mediates electroneutral potassium-chloride cotransport when activated by cell swelling. May contribute to cell volume homeostasis in single cells. May be involved in the regulation of basolateral Cl(-) exit in NaCl absorbing epithelia. The chain is Solute carrier family 12 member 4 (SLC12A4) from Oryctolagus cuniculus (Rabbit).